Reading from the N-terminus, the 1229-residue chain is Receptor-type adenylate cyclase GRESAG 4.3 (1229 aa).

At 1 to 24 (MIARVCRLTKHSKPPHLPITLTTP) the chain is on the cytoplasmic side. Residues 25-45 (TLFLVVLVLLQLHPICVLVNV) form a helical membrane-spanning segment. Residues 46-845 (DDGGGVTVKA…PNGNALTPAQ (800 aa)) are Extracellular-facing. Asn77, Asn84, Asn626, Asn693, and Asn768 each carry an N-linked (GlcNAc...) asparagine glycan. The helical transmembrane segment at 846-866 (LAGVVGGSLFVVALAICLSVL) threads the bilayer. The Cytoplasmic portion of the chain corresponds to 867–1229 (ACFTLRGTRD…SNDLSDMIRV (363 aa)). One can recognise a Guanylate cyclase domain in the interval 889 to 1043 (TLIFTDIESS…RTSNMAARTE (155 aa)). 2 residues coordinate Mg(2+): Asp894 and Asp937.

It belongs to the adenylyl cyclase class-3 family. Mg(2+) serves as cofactor.

Its subcellular location is the membrane. The catalysed reaction is ATP = 3',5'-cyclic AMP + diphosphate. Could act as a receptor for an unknown ligand. The chain is Receptor-type adenylate cyclase GRESAG 4.3 (GRESAG 4.3) from Trypanosoma brucei brucei.